Reading from the N-terminus, the 622-residue chain is Cilia- and flagella-associated protein 206 (622 aa).

Residues Asn568 to Pro593 form a disordered region.

It belongs to the CFAP206 family. As to expression, expressed in the sperm, oviduct, lung, nasal cavity, brain ependyma and choroid plexus.

The protein resides in the cytoplasm. It localises to the cytoskeleton. It is found in the cilium axoneme. The protein localises to the cilium basal body. Functionally, essential for sperm motility and is involved in the regulation of the beating frequency of motile cilia on the epithelial cells of the respiratory tract. Required for the establishment of radial spokes in sperm flagella. The polypeptide is Cilia- and flagella-associated protein 206 (Mus musculus (Mouse)).